We begin with the raw amino-acid sequence, 407 residues long: 12S rRNA N(4)-cytidine methyltransferase METTL15 (407 aa).

Residues 100–102 (GGH), aspartate 119, phenylalanine 146, aspartate 169, and glutamine 176 contribute to the S-adenosyl-L-methionine site. The residue at position 358 (serine 358) is a Phosphoserine.

The protein belongs to the methyltransferase superfamily. RsmH family.

It localises to the mitochondrion matrix. It catalyses the reaction cytidine(839) in 12S rRNA + S-adenosyl-L-methionine = N(4)-methylcytidine(839) in 12S rRNA + S-adenosyl-L-homocysteine + H(+). In terms of biological role, N4-methylcytidine (m4C) methyltransferase responsible for the methylation of position C839 in mitochondrial 12S rRNA. Involved in the stabilization of 12S rRNA folding, therefore facilitating the assembly of the mitochondrial small ribosomal subunits. This chain is 12S rRNA N(4)-cytidine methyltransferase METTL15 (METTL15), found in Pongo abelii (Sumatran orangutan).